The primary structure comprises 375 residues: Pectate lyase 1 (375 aa).

Positions 1–21 (MASCTLLAVLVFLCAIVSCFS) are cleaved as a signal peptide. C28 and C45 are joined by a disulfide. A glycan (N-linked (GlcNAc...) asparagine) is linked at N110. A disulfide bridge connects residues C128 and C147. The N-linked (GlcNAc...) asparagine glycan is linked to N148. Residue D170 participates in Ca(2+) binding. N178 carries N-linked (GlcNAc...) asparagine glycosylation. The Ca(2+) site is built by D194 and D198. The active site involves R250. N-linked (GlcNAc...) asparagine glycosylation is present at N293. C306 and C312 are joined by a disulfide. An N-linked (GlcNAc...) asparagine glycan is attached at N352.

This sequence belongs to the polysaccharide lyase 1 family. Amb a subfamily. Ca(2+) is required as a cofactor.

The catalysed reaction is Eliminative cleavage of (1-&gt;4)-alpha-D-galacturonan to give oligosaccharides with 4-deoxy-alpha-D-galact-4-enuronosyl groups at their non-reducing ends.. It participates in glycan metabolism; pectin degradation; 2-dehydro-3-deoxy-D-gluconate from pectin: step 2/5. In terms of biological role, has pectate lyase activity. This Chamaecyparis obtusa (Hinoki false-cypress) protein is Pectate lyase 1.